The following is a 312-amino-acid chain: Pantothenate kinase (312 aa).

Residue 97–104 (GSVAVGKS) participates in ATP binding.

This sequence belongs to the prokaryotic pantothenate kinase family.

The protein resides in the cytoplasm. It catalyses the reaction (R)-pantothenate + ATP = (R)-4'-phosphopantothenate + ADP + H(+). It functions in the pathway cofactor biosynthesis; coenzyme A biosynthesis; CoA from (R)-pantothenate: step 1/5. This chain is Pantothenate kinase, found in Mycolicibacterium vanbaalenii (strain DSM 7251 / JCM 13017 / BCRC 16820 / KCTC 9966 / NRRL B-24157 / PYR-1) (Mycobacterium vanbaalenii).